A 317-amino-acid polypeptide reads, in one-letter code: Small glutamine-rich tetratricopeptide repeat-containing protein 2 (317 aa).

4 TPR repeats span residues 14-48 (LKQAITTGSISEEEKESLEVAAQCIQDSFKIKPEE), 83-116 (AEKLKLEGNNAIAAKDYQKALDLYTKAIEIDPTS), 118-150 (VYYSNRAAAYNQLGQFENAVEDALTCLSLDPHH), and 151-184 (ARAFGRLGRAKLSLGDAAAAADAYKKGLDFDPNN). Residues 198-215 (LNQPSDSSATSGADQART) are compositionally biased toward polar residues. Disordered stretches follow at residues 198-224 (LNQPSDSSATSGADQARTSAGAAPDLG) and 298-317 (MNNNNNGNTDNNNQGNPPPQ).

Belongs to the SGT family.

The protein localises to the cytoplasm. The protein resides in the nucleus. Functionally, co-chaperone that binds to the molecular chaperone Hsp70 and regulates Hsp70 ATPase activity. This chain is Small glutamine-rich tetratricopeptide repeat-containing protein 2 (sgt2), found in Schizosaccharomyces pombe (strain 972 / ATCC 24843) (Fission yeast).